The following is a 341-amino-acid chain: Mitochondrial transcription factor 1 (341 aa).

L23, E77, D101, and N137 together coordinate S-adenosyl-L-methionine.

Belongs to the class I-like SAM-binding methyltransferase superfamily. rRNA adenine N(6)-methyltransferase family.

It is found in the mitochondrion. In terms of biological role, mitochondrial transcription factor that confers selective promoter recognition on the core subunit of the yeast mitochondrial RNA polymerase. Interacts with DNA in a non-specific manner. This chain is Mitochondrial transcription factor 1 (MTF1), found in Saccharomyces paradoxus (Yeast).